The chain runs to 228 residues: Histidine decarboxylase (228 aa).

Histidine 30 provides a ligand contact to substrate. An N6-(pyridoxal phosphate)lysine modification is found at lysine 143.

It belongs to the group II decarboxylase family. Homotetramer. It depends on pyridoxal 5'-phosphate as a cofactor.

The enzyme catalyses L-histidine + H(+) = histamine + CO2. The polypeptide is Histidine decarboxylase (hdc) (Raoultella ornithinolytica (Klebsiella ornithinolytica)).